The sequence spans 142 residues: Large ribosomal subunit protein uL11 (142 aa).

The protein belongs to the universal ribosomal protein uL11 family. Part of the ribosomal stalk of the 50S ribosomal subunit. Interacts with L10 and the large rRNA to form the base of the stalk. L10 forms an elongated spine to which L12 dimers bind in a sequential fashion forming a multimeric L10(L12)X complex. Post-translationally, one or more lysine residues are methylated.

Functionally, forms part of the ribosomal stalk which helps the ribosome interact with GTP-bound translation factors. This Acinetobacter baumannii (strain AB307-0294) protein is Large ribosomal subunit protein uL11.